Reading from the N-terminus, the 122-residue chain is LYR motif-containing protein 1 (122 aa).

This sequence belongs to the complex I LYR family.

May promote cell proliferation and inhibition of apoptosis of preadipocytes. This Mus musculus (Mouse) protein is LYR motif-containing protein 1 (Lyrm1).